The primary structure comprises 380 residues: Lipid-A-disaccharide synthase (380 aa).

The protein belongs to the LpxB family.

The enzyme catalyses a lipid X + a UDP-2-N,3-O-bis[(3R)-3-hydroxyacyl]-alpha-D-glucosamine = a lipid A disaccharide + UDP + H(+). Its pathway is bacterial outer membrane biogenesis; LPS lipid A biosynthesis. Functionally, condensation of UDP-2,3-diacylglucosamine and 2,3-diacylglucosamine-1-phosphate to form lipid A disaccharide, a precursor of lipid A, a phosphorylated glycolipid that anchors the lipopolysaccharide to the outer membrane of the cell. In Photobacterium profundum (strain SS9), this protein is Lipid-A-disaccharide synthase.